Reading from the N-terminus, the 719-residue chain is MKLKNPDKHQSLSSNAKVDKIATDSLKNETDIELKNMNNEDYLRMSEHESIDPFVSASTIQTGIGIAGKILGTLGVPFAGQIASLYSFILGELWPKGKSQWEIFMEHVEEIINQKILTYARNKALSDLRGLGDALAVYHESLESWVENRNNTRARSVVKNQYIALELMFVQKLPSFAVSGEEVPLLPIYAQAANLHLLLLRDASIFGKEWGLSASEISTFYNRQVERTRDYSDHCIKWYNTGLNNLRGTNAKSWVRYNQFRKDMTLMVLDLVALFPSYDTLVYPIKTTSQLTREVYTDAIGTVHPNQAFASTTWYNNNAPSFSAIEAAVIRSPHLLDFLEKVTIYSLLSRWSNTQYMNMWGGHRLESRPIGGALNTSTQGSTNTSINPVTLQFTSRDVYRTESLAGLNLFLTQPVNGVPRVDFHWKFPTLPIASDNFYYLGYAGVGTQLQDSENELPPETTGQPNYESYSHRLSHIGLISASHVKALVYSWTHRSADRTNTIEPNSITQIPLVKAFNLSSGAAVVRGPGFTGGDILRRTNTGTFGDIRVNINPPFAQRYRVRIRYASTTDLQFHTSINGKAINQGNFSATMNRGEDLDYKTFRTIGFTTPFSFSDVQSTFTIGAWNFSSGNEVYIDRIEFVPVEVTYEAEYDFEKAQEKVTALFTSTNPRGLKTDVKDYHIDQVSNLVESLSDEFYLDEKRELFEIVKYAKQIHIERNM.

Belongs to the delta endotoxin family.

Functionally, promotes colloidosmotic lysis by binding to the midgut epithelial cells of certain coleopteran and lepidopteran species. Active on Plutella xylostella but not on Bombyx mori. The polypeptide is Pesticidal crystal protein Cry1Ib (cry1Ib) (Bacillus thuringiensis subsp. entomocidus).